A 477-amino-acid polypeptide reads, in one-letter code: Myc-associated zinc finger protein (477 aa).

Disordered stretches follow at residues 59-78 (AQSP…APAA) and 121-146 (TVDT…PAAE). Over residues 130–141 (PPAPPPPPPPVS) the composition is skewed to pro residues. 4 consecutive C2H2-type zinc fingers follow at residues 190-212 (YICA…EAIH), 279-301 (HACE…KLSH), 307-329 (YQCP…VRSH), and 337-360 (YNCS…RQVH). Ser361 carries the post-translational modification Phosphoserine. The segment at 366-388 (FKCEKCEAAFATKDRLRAHTVRH) adopts a C2H2-type 5 zinc-finger fold. Residues 392 to 413 (VPCHVCGKMLSSAYISDHMKVH) form a C2H2-type 6; atypical zinc finger.

In terms of assembly, interacts with BPTF. Forms a heterodimer with MAZ isoform 2; the interaction inhibits MAZ isoform 1-mediated transcription activation. As to quaternary structure, forms a heterodimer with MAZ isoform 1; the interaction inhibits MAZ isoform 1-mediated transcription activation. Present in kidney, liver and brain. In the brain, highest levels are found in motor cortex and midfrontal cortex (at protein level). As to expression, expressed in the heart, brain, placenta, lung, liver, skeletal muscle and weakly expressed in the kidney. Expressed in the joint synovium.

The protein resides in the nucleus. Transcriptional regulator, potentially with dual roles in transcription initiation and termination. Functionally, binds DNA and functions as a transcriptional activator. Binds to two G/A-rich sites, ME1a1 and ME1a2, within the MYC promoter having greater affinity for the former. Also binds to multiple G/C-rich sites within the promoter of the Sp1 family of transcription factors. In terms of biological role, binds DNA and functions as a transcriptional activator. Inhibits MAZ isoform 1-mediated transcription. Its function is as follows. Binds DNA and functions as a transcriptional activator. This is Myc-associated zinc finger protein (MAZ) from Homo sapiens (Human).